The primary structure comprises 327 residues: DNA polymerase III subunit delta' (327 aa).

DNA polymerase III contains a core (composed of alpha, epsilon and theta chains) that associates with a tau subunit. This core dimerizes to form the POLIII' complex. PolIII' associates with the gamma complex (composed of gamma, delta, delta', psi and chi chains) and with the beta chain to form the complete DNA polymerase III complex.

The catalysed reaction is DNA(n) + a 2'-deoxyribonucleoside 5'-triphosphate = DNA(n+1) + diphosphate. In terms of biological role, DNA polymerase III is a complex, multichain enzyme responsible for most of the replicative synthesis in bacteria. This DNA polymerase also exhibits 3' to 5' exonuclease activity. The sequence is that of DNA polymerase III subunit delta' (holB) from Haemophilus influenzae (strain ATCC 51907 / DSM 11121 / KW20 / Rd).